The chain runs to 312 residues: Acetyl-coenzyme A carboxylase carboxyl transferase subunit alpha (312 aa).

The CoA carboxyltransferase C-terminal domain occupies 36 to 286 (RLDKEVKSIY…KEYFLDALRT (251 aa)).

This sequence belongs to the AccA family. As to quaternary structure, acetyl-CoA carboxylase is a heterohexamer composed of biotin carboxyl carrier protein (AccB), biotin carboxylase (AccC) and two subunits each of ACCase subunit alpha (AccA) and ACCase subunit beta (AccD).

Its subcellular location is the cytoplasm. The enzyme catalyses N(6)-carboxybiotinyl-L-lysyl-[protein] + acetyl-CoA = N(6)-biotinyl-L-lysyl-[protein] + malonyl-CoA. The protein operates within lipid metabolism; malonyl-CoA biosynthesis; malonyl-CoA from acetyl-CoA: step 1/1. Its function is as follows. Component of the acetyl coenzyme A carboxylase (ACC) complex. First, biotin carboxylase catalyzes the carboxylation of biotin on its carrier protein (BCCP) and then the CO(2) group is transferred by the carboxyltransferase to acetyl-CoA to form malonyl-CoA. The protein is Acetyl-coenzyme A carboxylase carboxyl transferase subunit alpha of Helicobacter pylori (strain J99 / ATCC 700824) (Campylobacter pylori J99).